Consider the following 353-residue polypeptide: B1 bradykinin receptor (353 aa).

Topologically, residues 1 to 40 (MASSWPPLELQSSNQSQLFPQNATACDNAPEAWDLLHRVL) are extracellular. Asn-14 and Asn-22 each carry an N-linked (GlcNAc...) asparagine glycan. The chain crosses the membrane as a helical span at residues 41–64 (PTFIISICFFGLLGNLFVLLVFLL). The Cytoplasmic portion of the chain corresponds to 65-73 (PRRQLNVAE). Residues 74–98 (IYLANLAASDLVFVLGLPFWAENIW) form a helical membrane-spanning segment. Over 99–111 (NQFNWPFGALLCR) the chain is Extracellular. An intrachain disulfide couples Cys-110 to Cys-189. Residues 112 to 133 (VINGVIKANLFISIFLVVAISQ) traverse the membrane as a helical segment. Over 134–155 (DRYRVLVHPMASRRQQRRRQAR) the chain is Cytoplasmic. Residues 156–178 (VTCVLIWVVGGLLSIPTFLLRSI) form a helical membrane-spanning segment. Residues 179-199 (QAVPDLNITACILLLPHEAWH) are Extracellular-facing. Asn-185 carries an N-linked (GlcNAc...) asparagine glycan. A helical transmembrane segment spans residues 200-226 (FARIVELNILGFLLPLAAIVFFNYHIL). Residues 227–247 (ASLRTREEVSRTRCGGRKDSK) are Cytoplasmic-facing. A helical membrane pass occupies residues 248–272 (TTALILTLVVAFLVCWAPYHFFAFL). Topologically, residues 273–291 (EFLFQVQAVRGCFWEDFID) are extracellular. The helical transmembrane segment at 292-314 (LGLQLANFFAFTNSSLNPVIYVF) threads the bilayer. The Cytoplasmic portion of the chain corresponds to 315–353 (VGRLFRTKVWELYKQCTPKSLAPISSSHRKEIFQLFWRN). Cys-330 is lipidated: S-palmitoyl cysteine.

It belongs to the G-protein coupled receptor 1 family. Bradykinin receptor subfamily. BDKRB1 sub-subfamily.

Its subcellular location is the cell membrane. Its function is as follows. This is a receptor for bradykinin. Could be a factor in chronic pain and inflammation. The protein is B1 bradykinin receptor (BDKRB1) of Homo sapiens (Human).